Consider the following 37-residue polypeptide: Large ribosomal subunit protein bL36 (37 aa).

This sequence belongs to the bacterial ribosomal protein bL36 family.

This chain is Large ribosomal subunit protein bL36 (rpmJ), found in Oleidesulfovibrio alaskensis (strain ATCC BAA-1058 / DSM 17464 / G20) (Desulfovibrio alaskensis).